The chain runs to 382 residues: Succinyl-diaminopimelate desuccinylase (382 aa).

Histidine 68 is a Zn(2+) binding site. Aspartate 70 is an active-site residue. Position 101 (aspartate 101) interacts with Zn(2+). The Proton acceptor role is filled by glutamate 135. Positions 136, 164, and 350 each coordinate Zn(2+).

This sequence belongs to the peptidase M20A family. DapE subfamily. As to quaternary structure, homodimer. Requires Zn(2+) as cofactor. The cofactor is Co(2+).

The catalysed reaction is N-succinyl-(2S,6S)-2,6-diaminopimelate + H2O = (2S,6S)-2,6-diaminopimelate + succinate. It functions in the pathway amino-acid biosynthesis; L-lysine biosynthesis via DAP pathway; LL-2,6-diaminopimelate from (S)-tetrahydrodipicolinate (succinylase route): step 3/3. Functionally, catalyzes the hydrolysis of N-succinyl-L,L-diaminopimelic acid (SDAP), forming succinate and LL-2,6-diaminopimelate (DAP), an intermediate involved in the bacterial biosynthesis of lysine and meso-diaminopimelic acid, an essential component of bacterial cell walls. In Acidithiobacillus ferrooxidans (strain ATCC 23270 / DSM 14882 / CIP 104768 / NCIMB 8455) (Ferrobacillus ferrooxidans (strain ATCC 23270)), this protein is Succinyl-diaminopimelate desuccinylase.